Consider the following 471-residue polypeptide: Adenosylhomocysteinase (471 aa).

Residues threonine 60, aspartate 135, and glutamate 196 each contribute to the substrate site. 197–199 serves as a coordination point for NAD(+); that stretch reads TTT. Positions 226 and 230 each coordinate substrate. NAD(+) is bound by residues asparagine 231, 260–265, glutamate 283, asparagine 318, 339–341, and asparagine 387; these read GYGDVG and IGH.

It belongs to the adenosylhomocysteinase family. The cofactor is NAD(+).

The protein resides in the cytoplasm. It catalyses the reaction S-adenosyl-L-homocysteine + H2O = L-homocysteine + adenosine. The protein operates within amino-acid biosynthesis; L-homocysteine biosynthesis; L-homocysteine from S-adenosyl-L-homocysteine: step 1/1. In terms of biological role, may play a key role in the regulation of the intracellular concentration of adenosylhomocysteine. This Chlorobaculum tepidum (strain ATCC 49652 / DSM 12025 / NBRC 103806 / TLS) (Chlorobium tepidum) protein is Adenosylhomocysteinase.